We begin with the raw amino-acid sequence, 181 residues long: Adenylyl-sulfate kinase (181 aa).

Residue 13-20 participates in ATP binding; sequence GVSGAGKS. Residue Ser87 is the Phosphoserine intermediate of the active site.

This sequence belongs to the APS kinase family.

The enzyme catalyses adenosine 5'-phosphosulfate + ATP = 3'-phosphoadenylyl sulfate + ADP + H(+). The protein operates within sulfur metabolism; hydrogen sulfide biosynthesis; sulfite from sulfate: step 2/3. Its function is as follows. Catalyzes the synthesis of activated sulfate. The sequence is that of Adenylyl-sulfate kinase from Burkholderia ambifaria (strain ATCC BAA-244 / DSM 16087 / CCUG 44356 / LMG 19182 / AMMD) (Burkholderia cepacia (strain AMMD)).